The chain runs to 522 residues: Mediator of RNA polymerase II transcription subunit 1.2 (522 aa).

Residues 13 to 40 (LLEQRKNQELNIEHIDEEMRLEQVRQAA) are a coiled coil.

This sequence belongs to the Mediator complex subunit 1 family. Component of the Mediator complex.

The protein resides in the nucleus. Functionally, component of the Mediator complex, a coactivator involved in the regulated transcription of nearly all RNA polymerase II-dependent genes. Mediator functions as a bridge to convey information from gene-specific regulatory proteins to the basal RNA polymerase II transcription machinery. Mediator is recruited to promoters by direct interactions with regulatory proteins and serves as a scaffold for the assembly of a functional preinitiation complex with RNA polymerase II and the general transcription factors. This Caenorhabditis elegans protein is Mediator of RNA polymerase II transcription subunit 1.2 (mdt-1.2).